The chain runs to 174 residues: MKVSDRRKFEKANFDEFESALNNKNDLVHCPSITLFESIPTEVRSFYEDEKSGLIKVVKFRTGAMNRKRSFEKIVISVMVGKNVQKFLTFVEDEPDFQGGPIPSKYLIPKKINLMVYTLFQVHTLKFNRKDYDTLSLFYLNRGYYNELSFPCPGTLSRNSECQAERQLYDAYFH.

This is an uncharacterized protein from Saccharomyces cerevisiae (strain ATCC 204508 / S288c) (Baker's yeast).